Reading from the N-terminus, the 490-residue chain is Serine palmitoyltransferase 2 (490 aa).

The helical transmembrane segment at 10-30 (VDDVGYLPILFLYIAYAFIIF) threads the bilayer. N6-(pyridoxal phosphate)lysine is present on lysine 321.

The protein belongs to the class-II pyridoxal-phosphate-dependent aminotransferase family. Forms a heterodimer with sptA. Requires pyridoxal 5'-phosphate as cofactor.

Its subcellular location is the endoplasmic reticulum membrane. The catalysed reaction is L-serine + hexadecanoyl-CoA + H(+) = 3-oxosphinganine + CO2 + CoA. Its pathway is lipid metabolism; sphingolipid metabolism. Its function is as follows. Catalytic subunit of serine palmitoyltransferase (SPT), which catalyzes the committed step in the synthesis of sphingolipids, the condensation of serine with palmitoyl CoA to form the long chain base 3-ketosphinganine. The sequence is that of Serine palmitoyltransferase 2 (sptB) from Dictyostelium discoideum (Social amoeba).